The primary structure comprises 429 residues: Probable imidazolonepropionase (429 aa).

2 residues coordinate 4-imidazolone-5-propanoate: Y161 and H194. Residue Y161 coordinates N-formimidoyl-L-glutamate. H262 lines the Fe(3+) pocket. Zn(2+) is bound at residue H262. Residue E265 coordinates 4-imidazolone-5-propanoate. D336 is a Fe(3+) binding site. Position 336 (D336) interacts with Zn(2+). N-formimidoyl-L-glutamate is bound at residue N338.

The protein belongs to the metallo-dependent hydrolases superfamily. HutI family. Zn(2+) serves as cofactor. Fe(3+) is required as a cofactor.

It catalyses the reaction 4-imidazolone-5-propanoate + H2O = N-formimidoyl-L-glutamate. It functions in the pathway amino-acid degradation; L-histidine degradation into L-glutamate; N-formimidoyl-L-glutamate from L-histidine: step 3/3. This is Probable imidazolonepropionase (amdhd1) from Nematostella vectensis (Starlet sea anemone).